Consider the following 248-residue polypeptide: Thioredoxin-like protein AAED1, chloroplastic (248 aa).

The N-terminal 52 residues, 1-52 (MAIALSSSSTITSITLQPKLKTIHGLGTVLPGYSVKSHFRSVSLRRSAVVVS), are a transit peptide targeting the chloroplast. N-acetylalanine is present on A53.

Belongs to the peroxiredoxin-like PRXL2 family. PRXL2C subfamily.

Its subcellular location is the plastid. It is found in the chloroplast. The sequence is that of Thioredoxin-like protein AAED1, chloroplastic from Arabidopsis thaliana (Mouse-ear cress).